The sequence spans 575 residues: Urease subunit alpha (575 aa).

The Urease domain occupies 137–575; sequence GGIDCHIHFI…LPMTQRYFLF (439 aa). Ni(2+) is bound by residues H142, H144, and K225. K225 is modified (N6-carboxylysine). H227 contacts substrate. Residues H254 and H280 each coordinate Ni(2+). H328 serves as the catalytic Proton donor. D368 contacts Ni(2+).

The protein belongs to the metallo-dependent hydrolases superfamily. Urease alpha subunit family. Heterotrimer of UreA (gamma), UreB (beta) and UreC (alpha) subunits. Three heterotrimers associate to form the active enzyme. The cofactor is Ni cation. In terms of processing, carboxylation allows a single lysine to coordinate two nickel ions.

The protein localises to the cytoplasm. The enzyme catalyses urea + 2 H2O + H(+) = hydrogencarbonate + 2 NH4(+). It participates in nitrogen metabolism; urea degradation; CO(2) and NH(3) from urea (urease route): step 1/1. This Methylibium petroleiphilum (strain ATCC BAA-1232 / LMG 22953 / PM1) protein is Urease subunit alpha.